Consider the following 325-residue polypeptide: Methionyl-tRNA formyltransferase (325 aa).

112 to 115 (SLLP) lines the (6S)-5,6,7,8-tetrahydrofolate pocket.

It belongs to the Fmt family.

It catalyses the reaction L-methionyl-tRNA(fMet) + (6R)-10-formyltetrahydrofolate = N-formyl-L-methionyl-tRNA(fMet) + (6S)-5,6,7,8-tetrahydrofolate + H(+). In terms of biological role, attaches a formyl group to the free amino group of methionyl-tRNA(fMet). The formyl group appears to play a dual role in the initiator identity of N-formylmethionyl-tRNA by promoting its recognition by IF2 and preventing the misappropriation of this tRNA by the elongation apparatus. The chain is Methionyl-tRNA formyltransferase from Roseiflexus sp. (strain RS-1).